The chain runs to 181 residues: Salmonella anti-inflammatory response activator (181 aa).

Residues F4–N24 traverse the membrane as a helical segment.

As to quaternary structure, interacts with host (human) STAT3.

It localises to the membrane. The protein resides in the host cytoplasm. A Salmonella strain-specific effector that induces a host STAT3-dependent anti-inflammatory pathway. In bacteria-infected host cells (human) leads to phosphorylation of host STAT3, at least on 'Tyr-705' and interleukin-10 (IL-10, IL10) production; expressing the gene alone in host cells induces STAT3 phosphorylation and IL-10 production. IL-10 production requires STAT3 in infected cells. Contributes to virulence in mouse infection models. Encoded in only a few S.typhimurium serovars, it may be a specific effector for adaptation to bovine hosts. This Salmonella typhimurium (strain 14028s / SGSC 2262) protein is Salmonella anti-inflammatory response activator.